The chain runs to 168 residues: ATP synthase subunit b (168 aa).

Residues 10–30 (STILGNFILVTASFAVLIILI) traverse the membrane as a helical segment.

Belongs to the ATPase B chain family. F-type ATPases have 2 components, F(1) - the catalytic core - and F(0) - the membrane proton channel. F(1) has five subunits: alpha(3), beta(3), gamma(1), delta(1), epsilon(1). F(0) has three main subunits: a(1), b(2) and c(10-14). The alpha and beta chains form an alternating ring which encloses part of the gamma chain. F(1) is attached to F(0) by a central stalk formed by the gamma and epsilon chains, while a peripheral stalk is formed by the delta and b chains.

It is found in the cell membrane. F(1)F(0) ATP synthase produces ATP from ADP in the presence of a proton or sodium gradient. F-type ATPases consist of two structural domains, F(1) containing the extramembraneous catalytic core and F(0) containing the membrane proton channel, linked together by a central stalk and a peripheral stalk. During catalysis, ATP synthesis in the catalytic domain of F(1) is coupled via a rotary mechanism of the central stalk subunits to proton translocation. Functionally, component of the F(0) channel, it forms part of the peripheral stalk, linking F(1) to F(0). The protein is ATP synthase subunit b of Streptococcus suis (strain 98HAH33).